Consider the following 169-residue polypeptide: Myosin regulatory light chain 11 (169 aa).

Ala-2 bears the N,N,N-trimethylalanine mark. Phosphoserine occurs at positions 15 and 16. Phosphothreonine occurs at positions 25 and 35. The EF-hand 1 domain maps to 25-60; the sequence is TQIQEFKEAFTVIDQNRDGIIDKEDLRDTFAAMGRL. Ca(2+)-binding residues include Asp-38, Asn-40, Asp-42, and Asp-49. Ser-75 carries the post-translational modification Phosphoserine. 2 consecutive EF-hand domains span residues 95–130 and 131–166; these read DPED…QCDR and FSQE…GDAK. A Phosphothreonine modification is found at Thr-101.

Myosin is a hexamer of 2 heavy chains and 4 light chains.

Myosin regulatory subunit that plays an essential to maintain muscle integrity during early development. Plays a role in muscle contraction. The polypeptide is Myosin regulatory light chain 11 (Myl11) (Rattus norvegicus (Rat)).